We begin with the raw amino-acid sequence, 320 residues long: Cytochrome f (320 aa).

A signal peptide spans 1 to 35 (MQTRNAFSCIKEGITRSISISVMIYIIIRAPFSNA). Heme contacts are provided by Tyr-36, Cys-56, Cys-59, and His-60. Residues 286-306 (VQGLLFFLASIILAQIFLVLK) traverse the membrane as a helical segment.

This sequence belongs to the cytochrome f family. In terms of assembly, the 4 large subunits of the cytochrome b6-f complex are cytochrome b6, subunit IV (17 kDa polypeptide, petD), cytochrome f and the Rieske protein, while the 4 small subunits are PetG, PetL, PetM and PetN. The complex functions as a dimer. Heme is required as a cofactor.

Its subcellular location is the plastid. It is found in the chloroplast thylakoid membrane. Functionally, component of the cytochrome b6-f complex, which mediates electron transfer between photosystem II (PSII) and photosystem I (PSI), cyclic electron flow around PSI, and state transitions. The sequence is that of Cytochrome f from Phaseolus vulgaris (Kidney bean).